Reading from the N-terminus, the 395-residue chain is Digeranylgeranylglycerophospholipid reductase (395 aa).

The FAD site is built by Ala15, Asp34, Cys45, Ala46, Ala48, Arg97, Ala121, Asp276, and Gly288. Residue Arg329 coordinates a 2,3-bis-O-(geranylgeranyl)-sn-glycerol 1-phospholipid.

The protein belongs to the geranylgeranyl reductase family. DGGGPL reductase subfamily. Requires FAD as cofactor.

It carries out the reaction a 2,3-bis-O-phytanyl-sn-glycerol 1-phospholipid + 8 A = a 2,3-bis-O-(geranylgeranyl)-sn-glycerol 1-phospholipid + 8 AH2. It catalyses the reaction 2,3-bis-O-(phytanyl)-sn-glycerol 1-phosphate + 8 A = 2,3-bis-O-(geranylgeranyl)-sn-glycerol 1-phosphate + 8 AH2. The catalysed reaction is CDP-2,3-bis-O-(geranylgeranyl)-sn-glycerol + 8 AH2 = CDP-2,3-bis-O-(phytanyl)-sn-glycerol + 8 A. The enzyme catalyses archaetidylserine + 8 AH2 = 2,3-bis-O-phytanyl-sn-glycero-3-phospho-L-serine + 8 A. Its pathway is membrane lipid metabolism; glycerophospholipid metabolism. Is involved in the reduction of 2,3-digeranylgeranylglycerophospholipids (unsaturated archaeols) into 2,3-diphytanylglycerophospholipids (saturated archaeols) in the biosynthesis of archaeal membrane lipids. Catalyzes the formation of archaetidic acid (2,3-di-O-phytanyl-sn-glyceryl phosphate) from 2,3-di-O-geranylgeranylglyceryl phosphate (DGGGP) via the hydrogenation of each double bond of the isoprenoid chains. Is also probably able to reduce double bonds of geranyl groups in CDP-2,3-bis-O-(geranylgeranyl)-sn-glycerol and archaetidylserine, thus acting at various stages in the biosynthesis of archaeal membrane lipids. This Thermococcus kodakarensis (strain ATCC BAA-918 / JCM 12380 / KOD1) (Pyrococcus kodakaraensis (strain KOD1)) protein is Digeranylgeranylglycerophospholipid reductase.